A 132-amino-acid chain; its full sequence is C-glycoside deglycosidase beta subunit (132 aa).

Belongs to the C-glycoside deglycosidase beta subunit family. Heterodimer composed of an alpha subunit (CarB2) and a beta subunit (CarC2). A divalent metal cation is required as a cofactor.

The enzyme catalyses 3''-dehydroorientin = 1,5-anhydro-D-erythro-hex-1-en-3-ulose + luteolin. Activity is strongly reduced in the presence of chelating agents. In terms of biological role, carbon-carbon bond-cleaving enzyme which participates in the metabolism of C-glycosides. Acts on the C8-glycosylated compound 3''-dehydroorientin (3''-oxo-orientin). In Arthrobacter globiformis (strain ATCC 8010 / DSM 20124 / JCM 1332 / NBRC 12137 / NCIMB 8907 / NRRL B-2979 / 168), this protein is C-glycoside deglycosidase beta subunit.